The chain runs to 107 residues: UPF0473 protein LACR_0139 (107 aa).

The protein belongs to the UPF0473 family.

The chain is UPF0473 protein LACR_0139 from Lactococcus lactis subsp. cremoris (strain SK11).